A 327-amino-acid polypeptide reads, in one-letter code: DNA-directed RNA polymerase subunit alpha (327 aa).

The alpha N-terminal domain (alpha-NTD) stretch occupies residues 1–233 (MQNVLKSFLT…HQLAAFVDLK (233 aa)). Positions 247–327 (VNPLLLRPVE…GWPPADLTDQ (81 aa)) are alpha C-terminal domain (alpha-CTD).

Belongs to the RNA polymerase alpha chain family. Homodimer. The RNAP catalytic core consists of 2 alpha, 1 beta, 1 beta' and 1 omega subunit. When a sigma factor is associated with the core the holoenzyme is formed, which can initiate transcription.

The enzyme catalyses RNA(n) + a ribonucleoside 5'-triphosphate = RNA(n+1) + diphosphate. In terms of biological role, DNA-dependent RNA polymerase catalyzes the transcription of DNA into RNA using the four ribonucleoside triphosphates as substrates. The protein is DNA-directed RNA polymerase subunit alpha of Coxiella burnetii (strain CbuK_Q154) (Coxiella burnetii (strain Q154)).